Here is a 275-residue protein sequence, read N- to C-terminus: 2,3,4,5-tetrahydropyridine-2,6-dicarboxylate N-succinyltransferase (275 aa).

2 residues coordinate substrate: R104 and D141.

The protein belongs to the transferase hexapeptide repeat family. As to quaternary structure, homotrimer.

The protein resides in the cytoplasm. The enzyme catalyses (S)-2,3,4,5-tetrahydrodipicolinate + succinyl-CoA + H2O = (S)-2-succinylamino-6-oxoheptanedioate + CoA. It functions in the pathway amino-acid biosynthesis; L-lysine biosynthesis via DAP pathway; LL-2,6-diaminopimelate from (S)-tetrahydrodipicolinate (succinylase route): step 1/3. In Haemophilus influenzae (strain 86-028NP), this protein is 2,3,4,5-tetrahydropyridine-2,6-dicarboxylate N-succinyltransferase.